Here is a 130-residue protein sequence, read N- to C-terminus: MIGNWNYGTGRRKSAVARVFIKSGKGDIVVNGKPIKEYFARETSLMIVRQPLELTAHAETFDIKVNVTGGGETGQAGAVRHGITRALIDYDATLKSALSKAGYVTRDAREVERKKVGFHKARRRKQFSKR.

The protein belongs to the universal ribosomal protein uS9 family.

The sequence is that of Small ribosomal subunit protein uS9 from Cupriavidus taiwanensis (strain DSM 17343 / BCRC 17206 / CCUG 44338 / CIP 107171 / LMG 19424 / R1) (Ralstonia taiwanensis (strain LMG 19424)).